The chain runs to 450 residues: Bifunctional protein GlmU (450 aa).

Residues 1 to 221 (MRCIVLAAGM…SCEFIGINNR (221 aa)) are pyrophosphorylase. Residues 6–9 (LAAG), Lys-20, Gln-69, 74–75 (GT), 96–98 (YGD), Gly-135, Glu-150, Asn-165, and Asn-219 each bind UDP-N-acetyl-alpha-D-glucosamine. Mg(2+) is bound at residue Asp-98. A Mg(2+)-binding site is contributed by Asn-219. Residues 222–242 (IQLAQAEKFRRQWILEELMIK) are linker. Residues 243–450 (GVTIVDPETT…VIDKRKKEED (208 aa)) form an N-acetyltransferase region. The UDP-N-acetyl-alpha-D-glucosamine site is built by Arg-324 and Lys-342. His-354 acts as the Proton acceptor in catalysis. UDP-N-acetyl-alpha-D-glucosamine-binding residues include Tyr-357 and Asn-368. Acetyl-CoA contacts are provided by Ala-371, Ser-396, Ala-414, and Arg-431.

The protein in the N-terminal section; belongs to the N-acetylglucosamine-1-phosphate uridyltransferase family. This sequence in the C-terminal section; belongs to the transferase hexapeptide repeat family. Homotrimer. The cofactor is Mg(2+).

The protein resides in the cytoplasm. The enzyme catalyses alpha-D-glucosamine 1-phosphate + acetyl-CoA = N-acetyl-alpha-D-glucosamine 1-phosphate + CoA + H(+). It catalyses the reaction N-acetyl-alpha-D-glucosamine 1-phosphate + UTP + H(+) = UDP-N-acetyl-alpha-D-glucosamine + diphosphate. Its pathway is nucleotide-sugar biosynthesis; UDP-N-acetyl-alpha-D-glucosamine biosynthesis; N-acetyl-alpha-D-glucosamine 1-phosphate from alpha-D-glucosamine 6-phosphate (route II): step 2/2. It participates in nucleotide-sugar biosynthesis; UDP-N-acetyl-alpha-D-glucosamine biosynthesis; UDP-N-acetyl-alpha-D-glucosamine from N-acetyl-alpha-D-glucosamine 1-phosphate: step 1/1. It functions in the pathway bacterial outer membrane biogenesis; LPS lipid A biosynthesis. Functionally, catalyzes the last two sequential reactions in the de novo biosynthetic pathway for UDP-N-acetylglucosamine (UDP-GlcNAc). The C-terminal domain catalyzes the transfer of acetyl group from acetyl coenzyme A to glucosamine-1-phosphate (GlcN-1-P) to produce N-acetylglucosamine-1-phosphate (GlcNAc-1-P), which is converted into UDP-GlcNAc by the transfer of uridine 5-monophosphate (from uridine 5-triphosphate), a reaction catalyzed by the N-terminal domain. In Pseudothermotoga lettingae (strain ATCC BAA-301 / DSM 14385 / NBRC 107922 / TMO) (Thermotoga lettingae), this protein is Bifunctional protein GlmU.